Here is a 395-residue protein sequence, read N- to C-terminus: ATP synthase subunit a (395 aa).

5 consecutive transmembrane segments (helical) span residues 153 to 173, 246 to 266, 273 to 293, 313 to 333, and 339 to 359; these read FTNP…LVYF, HFLI…IVGF, FLSF…LVLL, MMAG…MLCM, and FIGD…ELGV.

Belongs to the ATPase A chain family. As to quaternary structure, F-type ATPases have 2 components, CF(1) - the catalytic core - and CF(0) - the membrane proton channel. CF(1) has five subunits: alpha(3), beta(3), gamma(1), delta(1), epsilon(1). CF(0) has three main subunits: a, b and c.

The protein localises to the mitochondrion inner membrane. Functionally, mitochondrial membrane ATP synthase (F(1)F(0) ATP synthase or Complex V) produces ATP from ADP in the presence of a proton gradient across the membrane which is generated by electron transport complexes of the respiratory chain. F-type ATPases consist of two structural domains, F(1) - containing the extramembraneous catalytic core and F(0) - containing the membrane proton channel, linked together by a central stalk and a peripheral stalk. During catalysis, ATP synthesis in the catalytic domain of F(1) is coupled via a rotary mechanism of the central stalk subunits to proton translocation. Key component of the proton channel; it may play a direct role in the translocation of protons across the membrane. In Nicotiana tabacum (Common tobacco), this protein is ATP synthase subunit a (ATP6).